The following is a 108-amino-acid chain: Small ribosomal subunit protein uS17 (108 aa).

This sequence belongs to the universal ribosomal protein uS17 family. As to quaternary structure, part of the 30S ribosomal subunit.

Its function is as follows. One of the primary rRNA binding proteins, it binds specifically to the 5'-end of 16S ribosomal RNA. The sequence is that of Small ribosomal subunit protein uS17 from Methanospirillum hungatei JF-1 (strain ATCC 27890 / DSM 864 / NBRC 100397 / JF-1).